A 382-amino-acid polypeptide reads, in one-letter code: Protein MGF 360-4L (382 aa).

The protein belongs to the asfivirus MGF 360 family.

Functionally, plays a role in virus cell tropism, and may be required for efficient virus replication in macrophages. The chain is Protein MGF 360-4L from Ornithodoros (relapsing fever ticks).